Reading from the N-terminus, the 152-residue chain is Transcriptional regulator MraZ (152 aa).

2 SpoVT-AbrB domains span residues 5–52 (ATLV…PLPE) and 81–124 (ASEC…DETT).

The protein belongs to the MraZ family. Forms oligomers.

The protein localises to the cytoplasm. It is found in the nucleoid. Functionally, negatively regulates its own expression and that of the subsequent genes in the proximal part of the division and cell wall (dcw) gene cluster. Acts by binding directly to DNA. May also regulate the expression of genes outside the dcw cluster. This is Transcriptional regulator MraZ from Citrobacter koseri (strain ATCC BAA-895 / CDC 4225-83 / SGSC4696).